A 244-amino-acid chain; its full sequence is Phosphoadenosine 5'-phosphosulfate reductase (244 aa).

The active-site Nucleophile; cysteine thiosulfonate intermediate is the C239.

It belongs to the PAPS reductase family. CysH subfamily.

It is found in the cytoplasm. It carries out the reaction [thioredoxin]-disulfide + sulfite + adenosine 3',5'-bisphosphate + 2 H(+) = [thioredoxin]-dithiol + 3'-phosphoadenylyl sulfate. It participates in sulfur metabolism; hydrogen sulfide biosynthesis; sulfite from sulfate: step 3/3. Functionally, catalyzes the formation of sulfite from phosphoadenosine 5'-phosphosulfate (PAPS) using thioredoxin as an electron donor. The sequence is that of Phosphoadenosine 5'-phosphosulfate reductase from Shigella flexneri serotype 5b (strain 8401).